Consider the following 113-residue polypeptide: Dynein light chain Tctex-type 1 (113 aa).

Met-1 carries the post-translational modification N-acetylmethionine. The interval 41-113 (QWTTNVVEQT…CIVSAFGLSI (73 aa)) is interaction with GNB1.

This sequence belongs to the dynein light chain Tctex-type family. As to quaternary structure, homodimer. The cytoplasmic dynein 1 complex consists of two catalytic heavy chains (HCs) and a number of non-catalytic subunits presented by intermediate chains (ICs), light intermediate chains (LICs) and light chains (LCs); the composition seems to vary in respect to the IC, LIC and LC composition. The heavy chain homodimer serves as a scaffold for the probable homodimeric assembly of the respective non-catalytic subunits. The ICs and LICs bind directly to the HC dimer and dynein LCs assemble on the IC dimer. DYNLT1 and DYNLT3 compete for association with dynein IC (DYNC1I1 or DYNC1I2). Self-associates. Interacts with RHO. Interacts with DYNC1I1 and DYNC1I2. Interacts with DOC2A, DOC2B and SCN10A. Interacts with PVR. Interacts with SVIL isoform 2. Interacts with GNB1; the interaction occurs in presence of guanine nucleotide-binding protein G(T) subunit gamma; the interaction diminishes the association of DYNLT1 with dynein IC (DYNC1I1 or DYNC1I2). Interacts with GNB2, GNB3 and GNB5; the interactions occur in presence of guanine nucleotide-binding protein G(T) subunit gamma. Interacts with ACVR2B and ARHGEF2. Interacts with DNAI4. Interacts with CFAP61. Post-translationally, phosphorylated by BMPR2. The phosphorylation status is proposed to regulate the association with the cytoplasmic dynein complex and may have role in cytoplasmic dynein cargo release.

The protein resides in the golgi apparatus. The protein localises to the cytoplasm. Its subcellular location is the cytoskeleton. It localises to the spindle. Its function is as follows. Acts as one of several non-catalytic accessory components of the cytoplasmic dynein 1 complex that are thought to be involved in linking dynein to cargos and to adapter proteins that regulate dynein function. Cytoplasmic dynein 1 acts as a motor for the intracellular retrograde motility of vesicles and organelles along microtubules. Binds to transport cargos and is involved in apical cargo transport such as rhodopsin-bearing vesicles in polarized epithelia. Is involved in intracellular targeting of D-type retrovirus gag polyproteins to the cytoplasmic assembly site. May also be a accessory component of axonemal dynein. In terms of biological role, plays a role in neuronal morphogenesis; the function is independent of cytoplasmic dynein and seems to be coupled to regulation of the actin cytoskeleton by enhancing Rac1 activity. Required for neurite outgrowth. The function in neurogenesis may be regulated by association with a G-protein beta-gamma dimer. May function as a receptor-independent activator of heterotrimeric G-protein signaling; the activation appears to be independent of a nucleotide exchange. Plays a role in regulating neurogenesis; inhibits the genesis of neurons from precursor cells during cortical development presumably by antagonizing ARHGEF2. Unrelated to the role in retrograde microtubule-associated movement may play a role in the dimerization of cytoplasmic proteins/domains such as for ACVR2B. Binds to the cytoplasmic domain of ACVR2B and, in vitro, inhibits ACVR2B signaling. Involved in the regulation of mitotic spindle orientation. The polypeptide is Dynein light chain Tctex-type 1 (Dynlt1) (Rattus norvegicus (Rat)).